The following is a 219-amino-acid chain: 7-cyano-7-deazaguanine synthase (219 aa).

10–20 is an ATP binding site; it reads FSGGQDSTTCL. Zn(2+)-binding residues include Cys-188, Cys-197, Cys-200, and Cys-203.

It belongs to the QueC family. Homodimer. Zn(2+) serves as cofactor.

The catalysed reaction is 7-carboxy-7-deazaguanine + NH4(+) + ATP = 7-cyano-7-deazaguanine + ADP + phosphate + H2O + H(+). Its pathway is purine metabolism; 7-cyano-7-deazaguanine biosynthesis. Its function is as follows. Catalyzes the ATP-dependent conversion of 7-carboxy-7-deazaguanine (CDG) to 7-cyano-7-deazaguanine (preQ(0)). In Clostridium botulinum (strain ATCC 19397 / Type A), this protein is 7-cyano-7-deazaguanine synthase.